Consider the following 451-residue polypeptide: Phosphoglucosamine mutase (451 aa).

Ser101 (phosphoserine intermediate) is an active-site residue. 4 residues coordinate Mg(2+): Ser101, Asp241, Asp243, and Asp245. Residue Ser101 is modified to Phosphoserine.

It belongs to the phosphohexose mutase family. It depends on Mg(2+) as a cofactor. Activated by phosphorylation.

It carries out the reaction alpha-D-glucosamine 1-phosphate = D-glucosamine 6-phosphate. Functionally, catalyzes the conversion of glucosamine-6-phosphate to glucosamine-1-phosphate. In Exiguobacterium sibiricum (strain DSM 17290 / CCUG 55495 / CIP 109462 / JCM 13490 / 255-15), this protein is Phosphoglucosamine mutase.